We begin with the raw amino-acid sequence, 270 residues long: uncharacterized protein (270 aa).

The protein resides in the virion. This is an uncharacterized protein from Acanthamoeba polyphaga (Amoeba).